The primary structure comprises 868 residues: Homeobox-leucine zipper protein HOX29 (868 aa).

The homeobox DNA-binding region spans 9–72; that stretch reads DASKYVRYTP…NRRCREKQRK (64 aa). Residues 64–106 are a coiled coil; the sequence is RRCREKQRKESSRLQALNRKLTAMNKLLMEENDRLQKQVSQLV. Residues 150–171 are disordered; it reads VTSGHHHQQQQHNVVQPPPRDA. The START domain maps to 169 to 397; that stretch reads RDASPAGLMS…VAHEDTRSVI (229 aa).

Belongs to the HD-ZIP homeobox family. Class III subfamily. As to expression, expressed in phloem.

It is found in the nucleus. Its function is as follows. Probable transcription factor that may be necessary for the proper patterning of vascular bundles. The protein is Homeobox-leucine zipper protein HOX29 (HOX29) of Oryza sativa subsp. japonica (Rice).